The sequence spans 221 residues: Octanoyltransferase (221 aa).

Positions 35 to 221 (ESYENRIIFC…RELLAALLSK (187 aa)) constitute a BPL/LPL catalytic domain. Substrate is bound by residues 80–87 (RGGDITYH), 152–154 (AIG), and 165–167 (GLA). Cysteine 183 (acyl-thioester intermediate) is an active-site residue.

This sequence belongs to the LipB family.

The protein resides in the cytoplasm. The catalysed reaction is octanoyl-[ACP] + L-lysyl-[protein] = N(6)-octanoyl-L-lysyl-[protein] + holo-[ACP] + H(+). It functions in the pathway protein modification; protein lipoylation via endogenous pathway; protein N(6)-(lipoyl)lysine from octanoyl-[acyl-carrier-protein]: step 1/2. Its function is as follows. Catalyzes the transfer of endogenously produced octanoic acid from octanoyl-acyl-carrier-protein onto the lipoyl domains of lipoate-dependent enzymes. Lipoyl-ACP can also act as a substrate although octanoyl-ACP is likely to be the physiological substrate. This chain is Octanoyltransferase, found in Bacteroides fragilis (strain ATCC 25285 / DSM 2151 / CCUG 4856 / JCM 11019 / LMG 10263 / NCTC 9343 / Onslow / VPI 2553 / EN-2).